A 1401-amino-acid chain; its full sequence is DNA-directed RNA polymerase subunit beta'' (1401 aa).

Zn(2+) is bound by residues cysteine 224, cysteine 294, cysteine 301, and cysteine 304.

Belongs to the RNA polymerase beta' chain family. RpoC2 subfamily. As to quaternary structure, in plastids the minimal PEP RNA polymerase catalytic core is composed of four subunits: alpha, beta, beta', and beta''. When a (nuclear-encoded) sigma factor is associated with the core the holoenzyme is formed, which can initiate transcription. Requires Zn(2+) as cofactor.

Its subcellular location is the plastid. The protein localises to the chloroplast. It catalyses the reaction RNA(n) + a ribonucleoside 5'-triphosphate = RNA(n+1) + diphosphate. Functionally, DNA-dependent RNA polymerase catalyzes the transcription of DNA into RNA using the four ribonucleoside triphosphates as substrates. This Nymphaea alba (White water-lily) protein is DNA-directed RNA polymerase subunit beta''.